Reading from the N-terminus, the 302-residue chain is DDRGK domain-containing protein 1 (302 aa).

The Lumenal segment spans residues 1–5 (MDGGG). A helical membrane pass occupies residues 6-26 (GMLGAVVCLLLVFAIFPLLLW). Residues 27–302 (RRRSDAAHRL…DENAAAGTEL (276 aa)) are Cytoplasmic-facing. Disordered stretches follow at residues 36-151 (LPPQ…EEAR) and 279-302 (DLEP…GTEL). Positions 79–91 (VDDADSDLEEEIQ) are enriched in acidic residues. Basic and acidic residues predominate over residues 103–151 (KRQDREAQRQAEEAARDSRRTKQDRYAEMRRKKDEEREAQERLMEEEAR).

This sequence belongs to the DDRGK1 family.

The protein localises to the endoplasmic reticulum membrane. Its function is as follows. Substrate adapter for ufmylation, the covalent attachment of the ubiquitin-like modifier UFM1 to substrate proteins. In Oryza sativa subsp. japonica (Rice), this protein is DDRGK domain-containing protein 1.